A 556-amino-acid polypeptide reads, in one-letter code: 2,3-bisphosphoglycerate-independent phosphoglycerate mutase (556 aa).

Mn(2+) is bound by residues D25 and S78. S78 serves as the catalytic Phosphoserine intermediate. Substrate contacts are provided by residues H137, 167-168 (RD), R203, R210, 283-286 (RADR), and K358. Positions 427, 431, 468, 469, and 498 each coordinate Mn(2+).

This sequence belongs to the BPG-independent phosphoglycerate mutase family. As to quaternary structure, monomer. Mn(2+) serves as cofactor. Found ubiquitously in germinating seed.

The protein localises to the cytoplasm. It catalyses the reaction (2R)-2-phosphoglycerate = (2R)-3-phosphoglycerate. The protein operates within carbohydrate degradation; glycolysis; pyruvate from D-glyceraldehyde 3-phosphate: step 3/5. Its function is as follows. Catalyzes the interconversion of 2-phosphoglycerate and 3-phosphoglycerate. This is 2,3-bisphosphoglycerate-independent phosphoglycerate mutase from Ricinus communis (Castor bean).